Reading from the N-terminus, the 143-residue chain is Large ribosomal subunit protein uL11 (143 aa).

Belongs to the universal ribosomal protein uL11 family. Part of the ribosomal stalk of the 50S ribosomal subunit. Interacts with L10 and the large rRNA to form the base of the stalk. L10 forms an elongated spine to which L12 dimers bind in a sequential fashion forming a multimeric L10(L12)X complex. In terms of processing, one or more lysine residues are methylated.

Its function is as follows. Forms part of the ribosomal stalk which helps the ribosome interact with GTP-bound translation factors. The polypeptide is Large ribosomal subunit protein uL11 (Erythrobacter litoralis (strain HTCC2594)).